A 172-amino-acid chain; its full sequence is Protein-export protein SecB (172 aa).

The protein belongs to the SecB family. In terms of assembly, homotetramer, a dimer of dimers. One homotetramer interacts with 1 SecA dimer.

Its subcellular location is the cytoplasm. One of the proteins required for the normal export of preproteins out of the cell cytoplasm. It is a molecular chaperone that binds to a subset of precursor proteins, maintaining them in a translocation-competent state. It also specifically binds to its receptor SecA. The protein is Protein-export protein SecB of Dinoroseobacter shibae (strain DSM 16493 / NCIMB 14021 / DFL 12).